Consider the following 277-residue polypeptide: Large ribosomal subunit protein uL2 (277 aa).

The disordered stretch occupies residues 216–277 (RRPHNRGVAM…IIRRRKVGKG (62 aa)).

The protein belongs to the universal ribosomal protein uL2 family. As to quaternary structure, part of the 50S ribosomal subunit. Forms a bridge to the 30S subunit in the 70S ribosome.

In terms of biological role, one of the primary rRNA binding proteins. Required for association of the 30S and 50S subunits to form the 70S ribosome, for tRNA binding and peptide bond formation. It has been suggested to have peptidyltransferase activity; this is somewhat controversial. Makes several contacts with the 16S rRNA in the 70S ribosome. The sequence is that of Large ribosomal subunit protein uL2 from Acidiphilium cryptum (strain JF-5).